Reading from the N-terminus, the 106-residue chain is MLLATTPIIEGKRITTYYGIVSGETIIGANVFRDFFASIRDIVGGRSGSYEEVLREAKDTALKEMSEQARQMGANAVIGVDLDYETVGGSGSMLMVTASGTAVFLE.

It belongs to the UPF0145 family.

The chain is UPF0145 protein BF0270 from Bacteroides fragilis (strain YCH46).